The primary structure comprises 500 residues: uncharacterized protein (500 aa).

The span at Met1–Ile13 shows a compositional bias: low complexity. The disordered stretch occupies residues Met1–Arg23. Phosphoserine is present on Ser9. 12 helical membrane passes run Val87–Leu107, Leu126–Ala146, Leu156–Cys176, Trp183–Tyr203, Met225–Ala245, Val261–Phe281, Phe312–Gln332, Gly351–Leu371, Ile380–Ala400, Val408–Ile428, Ile445–Ile465, and Val471–Met491.

This sequence belongs to the major facilitator superfamily.

It localises to the golgi apparatus. It is found in the membrane. This is an uncharacterized protein from Schizosaccharomyces pombe (strain 972 / ATCC 24843) (Fission yeast).